The chain runs to 838 residues: Protein translocase subunit SecA (838 aa).

ATP contacts are provided by residues Gln-85, 103-107 (GEGKT), and Asp-493. Zn(2+)-binding residues include Cys-823, Cys-825, Cys-834, and His-835.

The protein belongs to the SecA family. As to quaternary structure, monomer and homodimer. Part of the essential Sec protein translocation apparatus which comprises SecA, SecYEG and auxiliary proteins SecDF. Other proteins may also be involved. It depends on Zn(2+) as a cofactor.

The protein localises to the cell membrane. Its subcellular location is the cytoplasm. It catalyses the reaction ATP + H2O + cellular proteinSide 1 = ADP + phosphate + cellular proteinSide 2.. Part of the Sec protein translocase complex. Interacts with the SecYEG preprotein conducting channel. Has a central role in coupling the hydrolysis of ATP to the transfer of proteins into and across the cell membrane, serving as an ATP-driven molecular motor driving the stepwise translocation of polypeptide chains across the membrane. This chain is Protein translocase subunit SecA, found in Streptococcus gordonii (strain Challis / ATCC 35105 / BCRC 15272 / CH1 / DL1 / V288).